The primary structure comprises 586 residues: MSLSTHIRDYVEVLTGVTEASGNPLQLAKLISESLLYVLKICQSEVLQILSFQWIRNFSLLPIKIPAIYESIIGQTPPEALFDFVEVLHLGQNPVIAGFLNSAFFALPFSAIHFVSIRRLLTQGVPAAIYSFGGYIIGQILFMSCVIFGVQDIIIPWLTLEPLNYIAGLILLSRIIISMRFESLAELETWDHPKYKNYFIYRFLIAWCEQGSIFQFLSNITPSANPTILQGFAFNNLGLNLVQNFSYIGGLLLGSAAFTLFWMWLFLKIQTYILVHTLYYHHQIVATVNQICFLSALTLSFATLPYYAYNYLLVGPLGFVPEDNALLSTVFTHSYLKDGPKELSFLTEEPIMELKLFPFNKGQYLIFPELYQTLSLEELSYRADYAWVRRVEKFSLDVTATHVGGRKLARRLGFHKLRQSFAKLILPRQTLAMDYRLELNSKYKCEDHDADIKAILDSELTNTRKESSIRGRRYRGDLSYDPTLDRFYQWYDFENVSLESSDQMMNYVTRTSVQGRFLFPQSFIKKEINLGEIHHEIGLRIKQQYNQSLIFRTLLKVDISFLLARQPKKHHLSGDQECDLQIKRNI.

6 helical membrane passes run 95–115 (VIAG…IHFV), 129–151 (IYSF…FGVQ), 155–177 (IPWL…RIII), 198–217 (YFIY…FQFL), 247–267 (YIGG…WLFL), and 284–304 (IVAT…FATL).

Belongs to the ycf78 family.

Its subcellular location is the plastid membrane. This is an uncharacterized protein from Prototheca wickerhamii.